The following is a 390-amino-acid chain: Succinate--CoA ligase [ADP-forming] subunit beta (390 aa).

An ATP-grasp domain is found at lysine 9–glutamine 248. ATP is bound by residues lysine 50, glycine 57–glycine 59, glutamate 103, isoleucine 106, and glutamate 111. Residues asparagine 203 and aspartate 217 each coordinate Mg(2+). Substrate is bound by residues asparagine 268 and glycine 325–valine 327.

This sequence belongs to the succinate/malate CoA ligase beta subunit family. As to quaternary structure, heterotetramer of two alpha and two beta subunits. The cofactor is Mg(2+).

The catalysed reaction is succinate + ATP + CoA = succinyl-CoA + ADP + phosphate. The enzyme catalyses GTP + succinate + CoA = succinyl-CoA + GDP + phosphate. It functions in the pathway carbohydrate metabolism; tricarboxylic acid cycle; succinate from succinyl-CoA (ligase route): step 1/1. Functionally, succinyl-CoA synthetase functions in the citric acid cycle (TCA), coupling the hydrolysis of succinyl-CoA to the synthesis of either ATP or GTP and thus represents the only step of substrate-level phosphorylation in the TCA. The beta subunit provides nucleotide specificity of the enzyme and binds the substrate succinate, while the binding sites for coenzyme A and phosphate are found in the alpha subunit. This chain is Succinate--CoA ligase [ADP-forming] subunit beta, found in Leptospira borgpetersenii serovar Hardjo-bovis (strain JB197).